Reading from the N-terminus, the 101-residue chain is Urease subunit beta (101 aa).

It belongs to the urease beta subunit family. As to quaternary structure, heterotrimer of UreA (gamma), UreB (beta) and UreC (alpha) subunits. Three heterotrimers associate to form the active enzyme.

Its subcellular location is the cytoplasm. The enzyme catalyses urea + 2 H2O + H(+) = hydrogencarbonate + 2 NH4(+). It participates in nitrogen metabolism; urea degradation; CO(2) and NH(3) from urea (urease route): step 1/1. This chain is Urease subunit beta, found in Rhodopseudomonas palustris (strain ATCC BAA-98 / CGA009).